A 642-amino-acid polypeptide reads, in one-letter code: Threonine--tRNA ligase (642 aa).

Residues 1–61 (MPIITLPDGS…EQDSQLAIIT (61 aa)) form the TGS domain. The interval 243-534 (DHRKIGKQLD…LTEEYAGFFP (292 aa)) is catalytic. Zn(2+)-binding residues include Cys-334, His-385, and His-511.

This sequence belongs to the class-II aminoacyl-tRNA synthetase family. Homodimer. It depends on Zn(2+) as a cofactor.

Its subcellular location is the cytoplasm. The enzyme catalyses tRNA(Thr) + L-threonine + ATP = L-threonyl-tRNA(Thr) + AMP + diphosphate + H(+). Catalyzes the attachment of threonine to tRNA(Thr) in a two-step reaction: L-threonine is first activated by ATP to form Thr-AMP and then transferred to the acceptor end of tRNA(Thr). Also edits incorrectly charged L-seryl-tRNA(Thr). The chain is Threonine--tRNA ligase from Proteus mirabilis (strain HI4320).